The following is a 115-amino-acid chain: Large ribosomal subunit protein bL19 (115 aa).

The protein belongs to the bacterial ribosomal protein bL19 family.

Its function is as follows. This protein is located at the 30S-50S ribosomal subunit interface and may play a role in the structure and function of the aminoacyl-tRNA binding site. The chain is Large ribosomal subunit protein bL19 from Streptococcus equi subsp. zooepidemicus (strain H70).